The following is a 2898-amino-acid chain: Pericentrin (2898 aa).

A disordered region spans residues 1–117; it reads MEDEQEQRRR…QPPPPQTAHS (117 aa). The span at 34-44 shows a compositional bias: basic residues; sequence SKKKTAKRKGS. A Phosphoserine modification is found at S44. Coiled coils occupy residues 127–343 and 382–434; these read LNNM…IRLL and AQQQ…DSLE. The segment at 429–460 is disordered; it reads REDSLESTEISSSCVLPEETSGREGKEPPDPL. The segment covering 448–457 has biased composition (basic and acidic residues); it reads TSGREGKEPP. 4 coiled-coil regions span residues 468-527, 611-696, 727-787, and 872-939; these read KVQE…LREK, CALQ…LETH, VADV…SLRM, and SQDQ…LRRL. Residue S1022 is modified to Phosphoserine. Coiled coils occupy residues 1069-1383, 1429-1482, and 1529-1593; these read EREF…QENM, NEVV…SLMG, and QLLA…AKEA. S1437 bears the Phosphoserine mark. 3 disordered regions span residues 1745-1786, 1815-1880, and 1958-1979; these read VASR…DDVL, TQEK…PLTP, and TSPS…GPDI. Polar residues-rich tracts occupy residues 1747-1766 and 1817-1834; these read SRDT…SENG and EKLT…SGHS. Residues 1801–1822 form an interaction with CDK5RAP2 region; that stretch reads NQDLLVQVEMPDFPTQEKLTSQ. 4 positions are modified to phosphoserine: S1828, S1859, S1860, and S1959. Over residues 1963-1976 the composition is skewed to basic and acidic residues; the sequence is ELARRSDGSRKSDG. Residue S1987 is modified to Phosphoserine. A compositionally biased stretch (polar residues) spans 2046-2055; it reads SESQDPSSAL. Residues 2046–2088 are disordered; that stretch reads SESQDPSSALNKGEPRDPLDGFPRDSQALSEVTTDKGEKESLE. Basic and acidic residues-rich tracts occupy residues 2058–2068 and 2078–2088; these read GEPRDPLDGFP and TTDKGEKESLE. Residue S2128 is modified to Phosphoserine. Coiled coils occupy residues 2211–2403 and 2429–2590; these read KVEQ…EALQ and HALL…ELSM. 2 disordered regions span residues 2509 to 2532 and 2653 to 2684; these read VSGG…QFQE and NRQS…QTTS. Positions 2545–2810 are interaction with NEK2; sequence LCAAGLLTSF…SQRQRSPSGP (266 aa). Residues 2653 to 2671 show a composition bias toward polar residues; the sequence is NRQSKSSLKQDGTDLQSSL. Positions 2758 to 2771 are calmodulin-binding; the sequence is KFRTAVRVVIAVLR. The disordered stretch occupies residues 2787-2898; it reads ALVHPKSTRH…QKSCHQKIKQ (112 aa). The segment covering 2792–2802 has biased composition (basic residues); the sequence is KSTRHGHRTSQ. Residues 2845 to 2860 are compositionally biased toward polar residues; that stretch reads TSTPSSRLERSLTASQ. The span at 2861–2874 shows a compositional bias: basic and acidic residues; the sequence is DPEHSLTEYIHHLE. S2865 is modified (phosphoserine).

As to quaternary structure, interacts with DISC1 and PCM1. Binds calmodulin. Interacts with CEP131. Interacts with CDK5RAP2; the interaction is leading to centrosomal localization of PCNT and CDK5RAP2. Interacts with CHD3. Interacts with CHD4; the interaction regulates centrosome integrity. Interacts with NEK2. Interacts with CCDC13. Interacts with CEP68. Interacts with ATF5; the ATF5:PCNT:polyglutamylated tubulin (PGT) tripartite unites the mother centriole and the pericentriolar material (PCM) in the centrosome. In terms of processing, cleaved during mitotis which leads to removal of CDK5RAP2 from the centrosome and promotes centriole disengagement and subsequent centriole separation. The C-terminal fragment is rapidly degraded following cleavage. Ubiquitinated by TRIM43; leading to proteasomal degradation. As to expression, expressed in heart and lung (at protein level). Expressed in kidney, thymus, liver, brain, muscle, testis, spleen, lung and heart.

Its subcellular location is the cytoplasm. It is found in the cytoskeleton. The protein resides in the microtubule organizing center. It localises to the centrosome. In terms of biological role, integral component of the filamentous matrix of the centrosome involved in the initial establishment of organized microtubule arrays in both mitosis and meiosis. Plays a role, together with DISC1, in the microtubule network formation. Is an integral component of the pericentriolar material (PCM). May play an important role in preventing premature centrosome splitting during interphase by inhibiting NEK2 kinase activity at the centrosome. The protein is Pericentrin (Pcnt) of Mus musculus (Mouse).